The sequence spans 360 residues: BLOC-1-related complex subunit 6 (360 aa).

The disordered stretch occupies residues 1–201 (MEAAQGRLGP…TGAGGGRRAT (201 aa)). The segment covering 23 to 33 (ATFSGRPSRTP) has biased composition (polar residues). Residue T41 is modified to Phosphothreonine. A Phosphoserine modification is found at S130. Acidic residues predominate over residues 144–155 (EGDDDDDEDEEA). S173 bears the Phosphoserine mark. Positions 179 to 198 (GACGGGGSSSSGETGAGGGR) are enriched in gly residues. A Phosphothreonine modification is found at T201. Position 204 is a phosphoserine (S204).

The protein belongs to the BORCS6 family. In terms of assembly, component of the BLOC-one-related complex (BORC) which is composed of BLOC1S1, BLOC1S2, BORCS5, BORCS6, BORCS7, BORCS8, KXD1 and SNAPIN.

Its subcellular location is the lysosome membrane. Its function is as follows. As part of the BORC complex may play a role in lysosomes movement and localization at the cell periphery. Associated with the cytosolic face of lysosomes, the BORC complex may recruit ARL8B and couple lysosomes to microtubule plus-end-directed kinesin motor. This chain is BLOC-1-related complex subunit 6, found in Mus musculus (Mouse).